The following is a 155-amino-acid chain: Ribosomal RNA large subunit methyltransferase H (155 aa).

S-adenosyl-L-methionine is bound by residues Leu73, Gly104, and 123 to 128 (LSPLTL).

Belongs to the RNA methyltransferase RlmH family. Homodimer.

The protein localises to the cytoplasm. It carries out the reaction pseudouridine(1915) in 23S rRNA + S-adenosyl-L-methionine = N(3)-methylpseudouridine(1915) in 23S rRNA + S-adenosyl-L-homocysteine + H(+). Specifically methylates the pseudouridine at position 1915 (m3Psi1915) in 23S rRNA. This Stutzerimonas stutzeri (strain A1501) (Pseudomonas stutzeri) protein is Ribosomal RNA large subunit methyltransferase H.